We begin with the raw amino-acid sequence, 256 residues long: MSFEDAVATGSTKVGTDATGKMTHSYRSDVNEFFPDAQDLDTVLRTAVGALSPVVKIERGFAIVRTDAEPSAPDFSDAATRERVFAHMARVERGTIERFLEEEAHTFSTRAKQGGFTAAAQSLNLDVHTSRSFPINFGNVDVLPALPRQSDPPLARIAYDEKFFSTAFALLPGQVSDPLILDSSVVLLQLHEEKSVDESVLATTGDSYAHHVRTWYPGYPLALLNTAKMPWAQESVVDTILAHPSFKDTFDNIFRR.

This is an uncharacterized protein from Treponema pallidum (strain Nichols).